A 1569-amino-acid chain; its full sequence is Pentafunctional AROM polypeptide (1569 aa).

The interval 1–382 is 3-dehydroquinate synthase; that stretch reads MAEAKKPGPE…HEPRASVVDD (382 aa). NAD(+) is bound by residues 49–51, 84–87, 115–117, and aspartate 120; these read DTN, EASK, and GGV. Residue arginine 131 participates in 7-phospho-2-dehydro-3-deoxy-D-arabino-heptonate binding. 140–141 is an NAD(+) binding site; it reads TT. Aspartate 147 and lysine 153 together coordinate 7-phospho-2-dehydro-3-deoxy-D-arabino-heptonate. Lysine 162 is a binding site for NAD(+). Asparagine 163 is a 7-phospho-2-dehydro-3-deoxy-D-arabino-heptonate binding site. Residues 180–183 and asparagine 191 contribute to the NAD(+) site; that span reads FLET. Glutamate 195 is a binding site for Zn(2+). 7-phospho-2-dehydro-3-deoxy-D-arabino-heptonate contacts are provided by residues 195 to 198 and lysine 248; that span reads EVVK. Glutamate 258 (proton acceptor; for 3-dehydroquinate synthase activity) is an active-site residue. Residues 262-266 and histidine 269 contribute to the 7-phospho-2-dehydro-3-deoxy-D-arabino-heptonate site; that span reads RNLLN. Histidine 269 provides a ligand contact to Zn(2+). The Proton acceptor; for 3-dehydroquinate synthase activity role is filled by histidine 273. Positions 285 and 354 each coordinate 7-phospho-2-dehydro-3-deoxy-D-arabino-heptonate. Zn(2+) is bound at residue histidine 285. Residues 395–837 are EPSP synthase; it reads VTPGVPSNLD…WDILSQAFKV (443 aa). Cysteine 819 acts as the For EPSP synthase activity in catalysis. A shikimate kinase region spans residues 859–1053; it reads ERSVFIIGMR…MEKDHSFFVS (195 aa). An ATP-binding site is contributed by 866–873; the sequence is GMRGAGKT. Residues 1054–1267 form a 3-dehydroquinase region; sequence LTVPDVSEAA…AAPGQMSAAE (214 aa). The Proton acceptor; for 3-dehydroquinate dehydratase activity role is filled by histidine 1170. The active-site Schiff-base intermediate with substrate; for 3-dehydroquinate dehydratase activity is the lysine 1198. The shikimate dehydrogenase stretch occupies residues 1280–1569; that stretch reads PCNFYLFGKP…RDARSAVLGL (290 aa).

This sequence in the N-terminal section; belongs to the sugar phosphate cyclases superfamily. Dehydroquinate synthase family. The protein in the 2nd section; belongs to the EPSP synthase family. In the 3rd section; belongs to the shikimate kinase family. It in the 4th section; belongs to the type-I 3-dehydroquinase family. This sequence in the C-terminal section; belongs to the shikimate dehydrogenase family. In terms of assembly, homodimer. The cofactor is Zn(2+).

The protein resides in the cytoplasm. The enzyme catalyses 7-phospho-2-dehydro-3-deoxy-D-arabino-heptonate = 3-dehydroquinate + phosphate. It catalyses the reaction 3-dehydroquinate = 3-dehydroshikimate + H2O. The catalysed reaction is shikimate + NADP(+) = 3-dehydroshikimate + NADPH + H(+). It carries out the reaction shikimate + ATP = 3-phosphoshikimate + ADP + H(+). The enzyme catalyses 3-phosphoshikimate + phosphoenolpyruvate = 5-O-(1-carboxyvinyl)-3-phosphoshikimate + phosphate. It participates in metabolic intermediate biosynthesis; chorismate biosynthesis; chorismate from D-erythrose 4-phosphate and phosphoenolpyruvate: step 2/7. The protein operates within metabolic intermediate biosynthesis; chorismate biosynthesis; chorismate from D-erythrose 4-phosphate and phosphoenolpyruvate: step 3/7. It functions in the pathway metabolic intermediate biosynthesis; chorismate biosynthesis; chorismate from D-erythrose 4-phosphate and phosphoenolpyruvate: step 4/7. Its pathway is metabolic intermediate biosynthesis; chorismate biosynthesis; chorismate from D-erythrose 4-phosphate and phosphoenolpyruvate: step 5/7. It participates in metabolic intermediate biosynthesis; chorismate biosynthesis; chorismate from D-erythrose 4-phosphate and phosphoenolpyruvate: step 6/7. The AROM polypeptide catalyzes 5 consecutive enzymatic reactions in prechorismate polyaromatic amino acid biosynthesis. This Fusarium vanettenii (strain ATCC MYA-4622 / CBS 123669 / FGSC 9596 / NRRL 45880 / 77-13-4) (Fusarium solani subsp. pisi) protein is Pentafunctional AROM polypeptide.